A 761-amino-acid chain; its full sequence is Cytoplasmic export protein 1 (761 aa).

2 HEAT repeats span residues 385–423 and 498–534; these read IYPHFIQGLTDSDATLRLQTLKTIPCIVSCLTERQLNNE and NTIANKILTVIAPGLLDKSPIVRGRAKILFEEYLEKL. Disordered regions lie at residues 660–692 and 714–761; these read DDGWIQDESGPSKVPQKHTRPQNSTLAKSIAPS and STVT…DTNW. Polar residues-rich tracts occupy residues 680-692 and 714-737; these read PQNSTLAKSIAPS and STVTTKSSLSNKTARSKPISSIRG. Over residues 747–761 the composition is skewed to acidic residues; it reads GWDDDGDSDSWDTNW. Serine 754 is modified (phosphoserine).

Associates with the nuclear pore complex (NPC). Interacts with GSP1, LOS1, MSN5, NUP116 and TEF2.

It is found in the cytoplasm. In terms of biological role, component of the nuclear tRNA export machinery that my collect tRNA from the nuclear tRNA export receptors of the aminoacylation-dependent export and may deliver aminoacylated tRNAs to the translation machinery pathway at the nuclear pore complex. The sequence is that of Cytoplasmic export protein 1 (CEX1) from Saccharomyces cerevisiae (strain ATCC 204508 / S288c) (Baker's yeast).